The primary structure comprises 593 residues: Elongation factor 4 (593 aa).

The 180-residue stretch at 2 to 181 folds into the tr-type G domain; the sequence is KNIRNFCIIA…AVVERIPHPT (180 aa). GTP contacts are provided by residues 14–19 and 128–131; these read DHGKST and NKCD.

Belongs to the TRAFAC class translation factor GTPase superfamily. Classic translation factor GTPase family. LepA subfamily.

It is found in the cell inner membrane. It carries out the reaction GTP + H2O = GDP + phosphate + H(+). Functionally, required for accurate and efficient protein synthesis under certain stress conditions. May act as a fidelity factor of the translation reaction, by catalyzing a one-codon backward translocation of tRNAs on improperly translocated ribosomes. Back-translocation proceeds from a post-translocation (POST) complex to a pre-translocation (PRE) complex, thus giving elongation factor G a second chance to translocate the tRNAs correctly. Binds to ribosomes in a GTP-dependent manner. This Phocaeicola vulgatus (strain ATCC 8482 / DSM 1447 / JCM 5826 / CCUG 4940 / NBRC 14291 / NCTC 11154) (Bacteroides vulgatus) protein is Elongation factor 4.